The primary structure comprises 1258 residues: Non-secreted LysM effector LysM19 (1258 aa).

Residues 148-168 (VTQSLPNISSHEKRDDHEGNS) form a disordered region. A compositionally biased stretch (basic and acidic residues) spans 157–168 (SHEKRDDHEGNS). LysM domains lie at 1028-1073 (IVYT…SICL) and 1179-1227 (RWHV…AYCT).

Belongs to the secreted LysM effector family.

Its function is as follows. Non-secreted LysM effector that might be involved in manipulation of host defenses for successful infection. The chain is Non-secreted LysM effector LysM19 from Penicillium expansum (Blue mold rot fungus).